Reading from the N-terminus, the 530-residue chain is UPF0422 protein lpp3030 (530 aa).

The signal sequence occupies residues M1 to A19. Residues D20–A66 are a coiled coil. Residues L50–A81 form a disordered region. Positions Q63 to S79 are enriched in low complexity.

This sequence belongs to the UPF0422 family.

The sequence is that of UPF0422 protein lpp3030 from Legionella pneumophila (strain Paris).